The chain runs to 201 residues: Alpha-1-acid glycoprotein 1 (201 aa).

The N-terminal stretch at 1-18 (MALSWVLTVLSLLPLLEA) is a signal peptide. Glutamine 19 carries the pyrrolidone carboxylic acid modification. Disulfide bonds link cysteine 23–cysteine 165 and cysteine 90–cysteine 183. The N-linked (GlcNAc...) (complex) asparagine glycan is linked to asparagine 33. Residue asparagine 56 is glycosylated (N-linked (GlcNAc...) asparagine). N-linked (GlcNAc...) (complex) asparagine glycosylation is present at asparagine 72. Residues asparagine 93 and asparagine 103 are each glycosylated (N-linked (GlcNAc...) asparagine).

This sequence belongs to the calycin superfamily. Lipocalin family. Post-translationally, N-glycosylated. N-glycan heterogeneity at Asn-33: Hex5HexNAc4 (minor), Hex6HexNAc5 (major) and dHex1Hex6HexNAc5 (minor). As to expression, expressed by the liver and secreted in plasma.

Its subcellular location is the secreted. Functionally, functions as a transport protein in the blood stream. Binds various ligands in the interior of its beta-barrel domain. Also binds synthetic drugs and influences their distribution and availability in the body. Appears to function in modulating the activity of the immune system during the acute-phase reaction. In Homo sapiens (Human), this protein is Alpha-1-acid glycoprotein 1 (ORM1).